We begin with the raw amino-acid sequence, 493 residues long: Dipeptide permease D (493 aa).

13 helical membrane passes run 14 to 34 (VVAL…LLIL), 49 to 69 (ELFS…GYLA), 91 to 111 (LVLG…AIIV), 138 to 158 (GGFS…PIAC), 167 to 187 (WAMG…IFLC), 212 to 232 (NWGW…VLFW), 235 to 255 (WSVY…AKIY), 267 to 287 (LGLI…AQQG), 312 to 332 (MFQS…AWLV), 344 to 364 (IWGK…ILTL), 379 to 399 (LMVL…PVAM), 413 to 433 (VLTG…AGVI), and 458 to 478 (VFEQ…LIWL).

It belongs to the major facilitator superfamily. Proton-dependent oligopeptide transporter (POT/PTR) (TC 2.A.17) family. DtpD subfamily.

Its subcellular location is the cell inner membrane. Its function is as follows. Probable proton-dependent permease that transports dipeptides. This chain is Dipeptide permease D, found in Salmonella paratyphi C (strain RKS4594).